A 367-amino-acid chain; its full sequence is rRNA processing protein RCL1 (367 aa).

Ser2 is subject to N-acetylserine.

The protein belongs to the RNA 3'-terminal cyclase family. Type 2 subfamily. Interacts directly with BMS1 and the U3 snoRNA to form a stable subcomplex. Component of the 90S small subunit processome also known as 90S pre-ribosome that consists of the 35S pre-rRNA, early-associating ribosomal proteins most of which are part of the small ribosomal subunit, the U3 snoRNA and associated proteins.

It is found in the nucleus. Its subcellular location is the nucleolus. Its function is as follows. Does not have cyclase activity. Plays a role in 40S-ribosomal-subunit biogenesis in the early pre-rRNA processing steps at sites A0, A1 and A2 that are required for proper maturation of the 18S RNA. RCL1 activates BMS1 by promoting GDP/GTP exchange. The polypeptide is rRNA processing protein RCL1 (RCL1) (Saccharomyces cerevisiae (strain ATCC 204508 / S288c) (Baker's yeast)).